The following is a 124-amino-acid chain: Fluoride-specific ion channel FluC (124 aa).

The next 4 helical transmembrane spans lie at 3 to 23 (YLLV…INTV), 36 to 56 (TFFI…YFAF), 66 to 86 (LFLM…SLDA), and 100 to 120 (LYVL…LALI). Positions 74 and 77 each coordinate Na(+).

The protein belongs to the fluoride channel Fluc/FEX (TC 1.A.43) family.

Its subcellular location is the cell inner membrane. The catalysed reaction is fluoride(in) = fluoride(out). Na(+) is not transported, but it plays an essential structural role and its presence is essential for fluoride channel function. Functionally, fluoride-specific ion channel. Important for reducing fluoride concentration in the cell, thus reducing its toxicity. The sequence is that of Fluoride-specific ion channel FluC from Rhodopseudomonas palustris (strain BisB5).